Reading from the N-terminus, the 146-residue chain is Hemoglobin subunit beta (146 aa).

The residue at position 1 (V1) is an N-acetylvaline; partial. The 145-residue stretch at 2–146 (HLTDAEKAAV…VANALAHKYH (145 aa)) folds into the Globin domain. At T12 the chain carries Phosphothreonine. The residue at position 59 (K59) is an N6-acetyllysine. Position 63 (H63) interacts with heme b. Residue K82 is modified to N6-acetyllysine. A heme b-binding site is contributed by H92. C93 carries the S-nitrosocysteine modification. Residue K144 is modified to N6-acetyllysine.

The protein belongs to the globin family. As to quaternary structure, heterotetramer of two alpha chains and two beta chains. Red blood cells.

Its function is as follows. Involved in oxygen transport from the lung to the various peripheral tissues. In Procavia capensis habessinica (Abyssinian hyrax), this protein is Hemoglobin subunit beta (HBB).